The chain runs to 116 residues: MKTIIVFLSLLVLATKFGDAKEGVNQEQKKEVTQNEFRVEYLNEMAAMSLLQQLEAIESALFEKEAGRNSRQKRCNGKNVPCGANHSPCCSGLSCEETFGYGWLYKSPYCVIPSNG.

An N-terminal signal peptide occupies residues 1-20; sequence MKTIIVFLSLLVLATKFGDA. A propeptide spanning residues 21-74 is cleaved from the precursor; the sequence is KEGVNQEQKKEVTQNEFRVEYLNEMAAMSLLQQLEAIESALFEKEAGRNSRQKR. 3 cysteine pairs are disulfide-bonded: Cys75/Cys90, Cys82/Cys95, and Cys89/Cys110.

It belongs to the neurotoxin 14 (magi-1) family. 06 (ICK-Trit) subfamily. Expressed by the venom gland.

Its subcellular location is the secreted. In terms of biological role, ion channel inhibitor. This Trittame loki (Brush-footed trapdoor spider) protein is U16-barytoxin-Tl1a.